Reading from the N-terminus, the 347-residue chain is NADH-ubiquinone oxidoreductase chain 2 (347 aa).

The next 11 helical transmembrane spans lie at 3–23, 25–45, 59–79, 96–116, 122–142, 149–169, 178–198, 200–220, 237–257, 274–294, and 325–345; these read PVVL…VMTT, HWLL…PILM, YFLT…INLI, IIMT…FWVP, IQLS…MSIL, INLH…GWGG, IMAY…IYNP, MALL…MTFM, MPLL…LPPL, NSII…FFYM, and LLSP…MLAL.

The protein belongs to the complex I subunit 2 family. As to quaternary structure, core subunit of respiratory chain NADH dehydrogenase (Complex I) which is composed of 45 different subunits. Interacts with TMEM242.

It is found in the mitochondrion inner membrane. The enzyme catalyses a ubiquinone + NADH + 5 H(+)(in) = a ubiquinol + NAD(+) + 4 H(+)(out). In terms of biological role, core subunit of the mitochondrial membrane respiratory chain NADH dehydrogenase (Complex I) which catalyzes electron transfer from NADH through the respiratory chain, using ubiquinone as an electron acceptor. Essential for the catalytic activity and assembly of complex I. This chain is NADH-ubiquinone oxidoreductase chain 2, found in Paranyctimene raptor (Unstriped tube-nosed fruit bat).